Consider the following 472-residue polypeptide: Ribosomal protein uS12 methylthiotransferase RimO (472 aa).

The region spanning 22–133 (PSVAFAHLGC…IVDVLKRVEA (112 aa)) is the MTTase N-terminal domain. [4Fe-4S] cluster-binding residues include Cys-31, Cys-67, Cys-96, Cys-171, Cys-175, and Cys-178. Residues 157–386 (TTDQAVAYLK…MALQQPISAE (230 aa)) form the Radical SAM core domain. Residues 389–460 (QRWVGRTIDV…VYDLTGQLVD (72 aa)) enclose the TRAM domain.

Belongs to the methylthiotransferase family. RimO subfamily. [4Fe-4S] cluster is required as a cofactor.

The protein localises to the cytoplasm. The enzyme catalyses L-aspartate(89)-[ribosomal protein uS12]-hydrogen + (sulfur carrier)-SH + AH2 + 2 S-adenosyl-L-methionine = 3-methylsulfanyl-L-aspartate(89)-[ribosomal protein uS12]-hydrogen + (sulfur carrier)-H + 5'-deoxyadenosine + L-methionine + A + S-adenosyl-L-homocysteine + 2 H(+). In terms of biological role, catalyzes the methylthiolation of an aspartic acid residue of ribosomal protein uS12. This is Ribosomal protein uS12 methylthiotransferase RimO from Prochlorococcus marinus (strain MIT 9303).